We begin with the raw amino-acid sequence, 390 residues long: Anhydro-N-acetylmuramic acid kinase (390 aa).

ATP is bound at residue 9–16 (GTSLDGID).

The protein belongs to the anhydro-N-acetylmuramic acid kinase family.

The catalysed reaction is 1,6-anhydro-N-acetyl-beta-muramate + ATP + H2O = N-acetyl-D-muramate 6-phosphate + ADP + H(+). Its pathway is amino-sugar metabolism; 1,6-anhydro-N-acetylmuramate degradation. It functions in the pathway cell wall biogenesis; peptidoglycan recycling. Its function is as follows. Catalyzes the specific phosphorylation of 1,6-anhydro-N-acetylmuramic acid (anhMurNAc) with the simultaneous cleavage of the 1,6-anhydro ring, generating MurNAc-6-P. Is required for the utilization of anhMurNAc either imported from the medium or derived from its own cell wall murein, and thus plays a role in cell wall recycling. This Bacillus cereus (strain B4264) protein is Anhydro-N-acetylmuramic acid kinase.